The following is a 317-amino-acid chain: MLTCIQPSSSSIGGFGKADDNVRILLMASVRNEFGDTSIFSRLGVTALGQHYVLVTKKKMFGGYTTHMITANMRNRPFISIPFKVSSGAQSIEESRDLISRLTTVLGRPGMFSFDDPPIGSQFPVGKELIQLDEVPVGVHDRQDKYLEKGDEVFCEVNVSGVKFYHSGIYAGDGMCYHFVCDAQESESFADALAVFSGASAHVVYDTWFEFVYALVEVSDVPPKIFRASHPLICRSGEQVVKYAEHLQRELENYDIRRCNCQHFSSECSTGVPFSYDMTSNFKYLACTVLKPTSTVVNAMTRPNRDRSSFASSSTSS.

Residues 156 to 277 form the LRAT domain; that stretch reads EVNVSGVKFY…CSTGVPFSYD (122 aa). Active-site residues include histidine 166 and histidine 178. Cysteine 261 (acyl-thioester intermediate) is an active-site residue.

In terms of tissue distribution, highly expressed in the cells of the spermatheca, the mouth, and the lining of the pharynx, the rectum, and the excretory canal. Also expressed in the pharyngeal intestinal junction cell.

The protein resides in the apical cell membrane. Functionally, putative acyltransferase. Plays a role in the morphogenesis of a vulval toroid cell, vulF, which is located where the vulva and the uterus connect. Not required for specifying vulval cell fate. This Caenorhabditis elegans protein is Egg-laying defective protein 26.